A 336-amino-acid polypeptide reads, in one-letter code: Pyridoxal 5'-phosphate synthase subunit PdxS (336 aa).

D30 provides a ligand contact to D-ribose 5-phosphate. Residue K87 is the Schiff-base intermediate with D-ribose 5-phosphate of the active site. G159 is a D-ribose 5-phosphate binding site. Position 171 (R171) interacts with D-glyceraldehyde 3-phosphate. Residues G257 and 278 to 279 (GS) each bind D-ribose 5-phosphate.

This sequence belongs to the PdxS/SNZ family. In the presence of PdxT, forms a dodecamer of heterodimers.

It catalyses the reaction aldehydo-D-ribose 5-phosphate + D-glyceraldehyde 3-phosphate + L-glutamine = pyridoxal 5'-phosphate + L-glutamate + phosphate + 3 H2O + H(+). The protein operates within cofactor biosynthesis; pyridoxal 5'-phosphate biosynthesis. In terms of biological role, catalyzes the formation of pyridoxal 5'-phosphate from ribose 5-phosphate (RBP), glyceraldehyde 3-phosphate (G3P) and ammonia. The ammonia is provided by the PdxT subunit. Can also use ribulose 5-phosphate and dihydroxyacetone phosphate as substrates, resulting from enzyme-catalyzed isomerization of RBP and G3P, respectively. In Thermoplasma acidophilum (strain ATCC 25905 / DSM 1728 / JCM 9062 / NBRC 15155 / AMRC-C165), this protein is Pyridoxal 5'-phosphate synthase subunit PdxS.